A 71-amino-acid chain; its full sequence is Alpha-cobratoxin (71 aa).

5 disulfide bridges follow: C3–C20, C14–C41, C26–C30, C45–C56, and C57–C62.

This sequence belongs to the three-finger toxin family. Long-chain subfamily. Type II alpha-neurotoxin sub-subfamily. Monomer, homo- or heterodimer with cytotoxins 1 (P60305), 2 (AC P01445), and 3 (AC P01446); disulfide-linked. In homodimer alpha-cobratoxin, selective reduction of Cys(26)-Cys(30) in one subunit does not affect the activity against the alpha-7/CHRNA7 nAChR, whereas its reduction in both subunits almost prevents alpha-7/CHRNA7 nAChR recognition. On the contrary, reduction of one or both Cys(26)-Cys(30) disulfide bonds in the homodimer considerably potentiates inhibition of the alpha-3-beta-2/CHRNA3-CHRNB2 nAChR by the toxin. As to expression, expressed by the venom gland.

It localises to the secreted. Its function is as follows. Monomer: binds with high affinity to muscular (alpha-1-beta-1-gamma-delta/CHRNA1-CHRNB1-CHRNG-CHRND) nAChR (tested on Torpedo californica, Kd=0.2-4.5 nM) and neuronal alpha-7/CHRNA7 nicotinic acetylcholine receptors (Kd=13-105 nM). Also inhibits GABA(A) channels. Heteropentamer targets studied are composed of alpha-1-beta-3-gamma-2 (GABRA1-GABRB3-GABRG2) subunits (IC(50)=236 nM), alpha-1-beta-2-gamma-2 (GABRA1-GABRB2-GABRG2) subunits (IC(50)=469 nM), alpha-2-beta-2-gamma-2 (GABRA2-GABRB2-GABRG2) subunits (IC(50)=485 nM), alpha-5-beta-3-gamma-2 (GABRA5-GABRB3-GABRG2) subunits (IC(50)=635 nM), and alpha-2-beta-3-gamma-2 (GABRA2-GABRB3-GABRG2) subunits (IC(50)=1099 nM) (activated by 10 uM GABA). Functionally, homodimer: binds with high affinity (but lower than the monomeric form) to muscular (IC(50)=9.7 nM) and with low affinity to neuronal alpha-7/CHRNA7 nAChRs (IC(50)=1370 nM). However, it acquires (compared to the monomeric form) the capacity to block alpha-3/beta-2 (CHRNA3/CHRNB2) nAChRs. In terms of biological role, heterodimer with cytotoxin 3 (AC P01446): is slightly more active than the homodimer in inhibiting alpha-7/CHRNA7 nAChR and is considerably more active in blocking the alpha-3-beta-2/CHRNA3-CHRNB2 nAChR. This is Alpha-cobratoxin from Naja kaouthia (Monocled cobra).